Consider the following 103-residue polypeptide: Large ribosomal subunit protein eL42 (103 aa).

The tract at residues 37–56 (GKRRYDRKQSGFGGQTKPVF) is disordered.

Belongs to the eukaryotic ribosomal protein eL42 family.

The polypeptide is Large ribosomal subunit protein eL42 (rpl36a) (Dictyostelium discoideum (Social amoeba)).